A 418-amino-acid chain; its full sequence is uncharacterized protein (418 aa).

This is an uncharacterized protein from Saccharomyces cerevisiae (strain ATCC 204508 / S288c) (Baker's yeast).